A 374-amino-acid polypeptide reads, in one-letter code: MATKLDYYAVLEVTRDANGDELKKAYRRLAMQYHPDRNPGDASAEARFKEINEAYDILKDEQKRAAYDRFGHAAFEGGGPGAGGFDFGGGLGDIFEQMFGDMMGGRRGGRRSGSDIQIQVSISFTEAFTGVKKPITVPTRVTCESCEGTGSADRDQGAETCPTCHGAGKVRAQQGFFLVERACPTCHGAGKVVRNPCAACHGAGTVERERTLEVAIPAGVEDGTRIRLSGEGEAGGKGAAPGDLYIHVAVEPHPIFQRDGANIYCRVPLRMSLAALGTEIEVPVVDGSRTKVKVPAGTQTGENFRLRGKGFSVLRSSARGDMYIQVSVETPRHLTKRQRELLEEFEAEAGDHERANPESTGFFSKVRDFFEGKL.

The J domain maps to Asp6–Gly71. The CR-type zinc finger occupies Gly130 to Glu209. Cys143, Cys146, Cys161, Cys164, Cys183, Cys186, Cys197, and Cys200 together coordinate Zn(2+). CXXCXGXG motif repeat units lie at residues Cys143–Gly150, Cys161–Gly168, Cys183–Gly190, and Cys197–Gly204.

The protein belongs to the DnaJ family. In terms of assembly, homodimer. Zn(2+) is required as a cofactor.

Its subcellular location is the cytoplasm. In terms of biological role, participates actively in the response to hyperosmotic and heat shock by preventing the aggregation of stress-denatured proteins and by disaggregating proteins, also in an autonomous, DnaK-independent fashion. Unfolded proteins bind initially to DnaJ; upon interaction with the DnaJ-bound protein, DnaK hydrolyzes its bound ATP, resulting in the formation of a stable complex. GrpE releases ADP from DnaK; ATP binding to DnaK triggers the release of the substrate protein, thus completing the reaction cycle. Several rounds of ATP-dependent interactions between DnaJ, DnaK and GrpE are required for fully efficient folding. Also involved, together with DnaK and GrpE, in the DNA replication of plasmids through activation of initiation proteins. This Gluconacetobacter diazotrophicus (strain ATCC 49037 / DSM 5601 / CCUG 37298 / CIP 103539 / LMG 7603 / PAl5) protein is Chaperone protein DnaJ.